The primary structure comprises 373 residues: Peptide chain release factor 1-like, mitochondrial (373 aa).

A mitochondrion-targeting transit peptide spans 1 to 25; it reads MRSGFLSGARRLWARRAFSRTPPPS. Residues 56–110 are a coiled coil; that stretch reads QLAAAARLLSEKERELRDTESLLHDENEDLKKLAESEIALCQKQITELKHQIISL. The GGQ domain stretch occupies residues 229-293; it reads PKDLRIDTKR…LRARLYSMHL (65 aa). The GGQ signature appears at 243-245; the sequence is GGQ. Q245 carries the post-translational modification N5-methylglutamine.

It belongs to the prokaryotic/mitochondrial release factor family. In terms of processing, methylation of glutamine in the GGQ triplet by HEMK1 is conserved from bacteria to mammals.

The protein resides in the mitochondrion. Its function is as follows. Mitochondrial peptide chain release factor that directs the termination of translation in response to the peptide chain termination codons UAA and UAG. In Mus musculus (Mouse), this protein is Peptide chain release factor 1-like, mitochondrial (Mtrf1l).